Consider the following 44-residue polypeptide: uncharacterized protein (44 aa).

This is an uncharacterized protein from Bacillus subtilis (strain 168).